The primary structure comprises 680 residues: MLRFVTKNSQDKSSDLFSICSDRGTFVAHNRVRTDFKFDNLVFNRVYGVSQKFTLVGNPTVCFNEGSSYLEGIAKKYLTLDGGLAIDNVLNELRSTCGIPGNAVASHAYNITSWRWYDNHVALLMNMLRAYHLQVLTEQGQYSAGDIPMYHDGHVKIKLPVTIDDTAGPTQFAWPSDRSTDSYPDWAQFSESFPSIDVPYLDVRPLTVTEVNFVLMMMSKWHRRTNLAIDYEAPQLADKFAYRHALTVQDADEWIEGDRTDDQFRPPSSKVMLSALRKYVNHNRLYNQFYTAAQLLAQIMMKPVPNCAEGYAWLMHDALVNIPKFGSIRGRYPFLLSGDAALIQATALEDWSAIMAKPELVFTYAMQVSVALNTGLYLRRVKKTGFGTTIDDSYEDGAFLQPETFVQAALACCTGQDAPLNGMSDVYVTYPDLLEFDAVTQVPITVIEPAGYNIVDDHLVVVGVPVACSPYMIFPVAAFDTANPYCGNFVIKAANKYLRKGAVYDKLEAWKLAWALRVAGYDTHFKVYGDTHGLTKFYADNGDTWTHIPEFVTDGDVMEVFVTAIERRARHFVELPRLNSPAFFRSVEVSTTIYDTHVQAGAHAVYHASRINLDYVKPVSTGIQVINAGELKNYWGSVRRTQQGLGVVGLTMPAVMPTGEPTAGAAHEELIEQADNVLVE.

Met-1 is modified (N-acetylmethionine; by host N-acetyltransferase MAK3).

This sequence belongs to the totivirus major capsid protein family. In terms of processing, acetylation is necessary for viral assembly.

It is found in the virion. Functionally, capsid protein self-assembles to form an icosahedral capsid with a T=2 symmetry, 40 nm in diameter, and consisting of 60 capsid proteins asymmetric dimers. The capsid encapsulates the genomic dsRNA and the polymerase and remains intact following cell entry to protect the dsRNA from degradation and to prevent unfavorable antiviral responses in the host cell during all the replication cycle of the virus. Nascent transcripts are transcribed within the structural confines of the virion and are extruded into the cytoplasm. In terms of biological role, binds and removes 5' cap structures from cellular mRNA. Forms a covalent bond with m7GMP through His-154 of the capsid protein while releasing the mRNA body. This Saccharomyces cerevisiae virus L-A (ScV-L-A) protein is Major capsid protein (gag).